A 581-amino-acid polypeptide reads, in one-letter code: Moesin/ezrin/radixin homolog 1 (581 aa).

The FERM domain occupies 8-298 (MNVRVTTMDA…GNHELYMRRR (291 aa)). Residues 452-519 (QVAKGSRAAA…EERRTLAERN (68 aa)) are disordered. The span at 459 to 469 (AAAALQAATTT) shows a compositional bias: low complexity. The span at 477–486 (EEEENEEELI) shows a compositional bias: acidic residues. The segment covering 495–519 (FSKDFDTDEHIKDPVEERRTLAERN) has biased composition (basic and acidic residues). T562 is modified (phosphothreonine).

Interacts with cytoskeletal actin.

The protein resides in the cell junction. It is found in the adherens junction. Its subcellular location is the cell projection. The protein localises to the microvillus. It localises to the rhabdomere. The protein resides in the cell membrane. It is found in the cytoplasm. Its subcellular location is the cytoskeleton. In terms of biological role, involved in connections of major cytoskeletal structures to the plasma membrane. The sequence is that of Moesin/ezrin/radixin homolog 1 from Anopheles gambiae (African malaria mosquito).